Reading from the N-terminus, the 123-residue chain is Histone H2B (123 aa).

A disordered region spans residues 1–31 (MPPKTSGKAAKKAGKAQKNITKNDKKKKRKR). At P2 the chain carries N-methylproline; partial. K44 is modified (N6-succinyllysine). S110 carries an O-linked (GlcNAc) serine glycan. Residues K114 and K118 each carry the N6-succinyllysine modification. Residue K118 forms a Glycyl lysine isopeptide (Lys-Gly) (interchain with G-Cter in ubiquitin) linkage.

The protein belongs to the histone H2B family. The nucleosome is a histone octamer containing two molecules each of H2A, H2B, H3 and H4 assembled in one H3-H4 heterotetramer and two H2A-H2B heterodimers. The octamer wraps approximately 147 bp of DNA. Post-translationally, phosphorylated by the catalytic component of the Dbf4-dependent kinase (DDK) complex Cdc7. In terms of processing, monoubiquitination of Lys-118 by Bre1 gives a specific tag for epigenetic transcriptional activation and is also prerequisite for histone H3 'Lys-4' and 'Lys-79' methylation. Deubiquitination of Lys-118 by the SAGA complex is involved in activating transcription of a large subset of genes. Methylation at Pro-2 increases upon heat shock. Post-translationally, glcNAcylation at Ser-110 promotes monoubiquitination of Lys-118. It fluctuates in response to extracellular glucose, and associates with transcribed genes.

It localises to the nucleus. The protein localises to the chromosome. Its function is as follows. Core component of nucleosome. Nucleosomes wrap and compact DNA into chromatin, limiting DNA accessibility to the cellular machineries which require DNA as a template. Histones thereby play a central role in transcription regulation, DNA repair, DNA replication and chromosomal stability. DNA accessibility is regulated via a complex set of post-translational modifications of histones, also called histone code, and nucleosome remodeling. This is Histone H2B (His2B) from Drosophila sechellia (Fruit fly).